The chain runs to 463 residues: L-seryl-tRNA(Sec) selenium transferase (463 aa).

Lys-295 is subject to N6-(pyridoxal phosphate)lysine.

The protein belongs to the SelA family. Homodecamer; pentamer of dimers. Binds only one seryl-tRNA(Sec) per dimer. Pyridoxal 5'-phosphate serves as cofactor.

The protein resides in the cytoplasm. It carries out the reaction L-seryl-tRNA(Sec) + selenophosphate + H(+) = L-selenocysteinyl-tRNA(Sec) + phosphate. The protein operates within aminoacyl-tRNA biosynthesis; selenocysteinyl-tRNA(Sec) biosynthesis; selenocysteinyl-tRNA(Sec) from L-seryl-tRNA(Sec) (bacterial route): step 1/1. In terms of biological role, converts seryl-tRNA(Sec) to selenocysteinyl-tRNA(Sec) required for selenoprotein biosynthesis. This chain is L-seryl-tRNA(Sec) selenium transferase, found in Proteus mirabilis (strain HI4320).